A 547-amino-acid chain; its full sequence is Varicidin biosynthesis cluster MFS-type transporer (547 aa).

Polar residues predominate over residues 1 to 17 (MTTSTSKNAISKSSQED). The tract at residues 1–33 (MTTSTSKNAISKSSQEDLCSDTKDKGSSGGGNE) is disordered. Helical transmembrane passes span 47 to 67 (LVLL…VCIS), 156 to 176 (LAPS…SVFT), 183 to 203 (WCFW…FLFV), 224 to 244 (ALGT…LQWG), 252 to 272 (SWRV…WLYV), 296 to 316 (ILFT…VPIW), 330 to 350 (INFL…GTLV), 360 to 382 (GQWR…WRYN), 392 to 412 (AGTL…PFIA), 422 to 442 (ISLG…VFLA), and 503 to 523 (CFLV…GMEW).

The protein belongs to the major facilitator superfamily. TCR/Tet family.

It is found in the cell membrane. MFS-type transporer; part of the gene cluster that mediates the biosynthesis of varicidin A, an antifungal natural product containing a cis-octahydrodecalin core. The protein is Varicidin biosynthesis cluster MFS-type transporer of Talaromyces variabilis (Penicillium variabile).